The chain runs to 273 residues: 2,3,4,5-tetrahydropyridine-2,6-dicarboxylate N-succinyltransferase (273 aa).

Substrate contacts are provided by arginine 104 and aspartate 141.

This sequence belongs to the transferase hexapeptide repeat family. Homotrimer.

The protein resides in the cytoplasm. It carries out the reaction (S)-2,3,4,5-tetrahydrodipicolinate + succinyl-CoA + H2O = (S)-2-succinylamino-6-oxoheptanedioate + CoA. It participates in amino-acid biosynthesis; L-lysine biosynthesis via DAP pathway; LL-2,6-diaminopimelate from (S)-tetrahydrodipicolinate (succinylase route): step 1/3. The protein is 2,3,4,5-tetrahydropyridine-2,6-dicarboxylate N-succinyltransferase of Aromatoleum aromaticum (strain DSM 19018 / LMG 30748 / EbN1) (Azoarcus sp. (strain EbN1)).